The sequence spans 229 residues: UPF0441 protein YE3666 (229 aa).

Disordered stretches follow at residues 101-125 (PAQAGMVPTSSSSSETTAAAPQQSG) and 190-229 (KPAVTNTITRGGFGESVAKQSSMQRSAATSSKTSTRSMGG). Composition is skewed to low complexity over residues 109-120 (TSSSSSETTAAA) and 214-229 (RSAATSSKTSTRSMGG).

The protein belongs to the UPF0441 family.

The protein is UPF0441 protein YE3666 of Yersinia enterocolitica serotype O:8 / biotype 1B (strain NCTC 13174 / 8081).